We begin with the raw amino-acid sequence, 514 residues long: Probable drug/proton antiporter YHK8 (514 aa).

Residues 1–74 (MVAEFQIASA…RHMSTARRYY (74 aa)) are Cytoplasmic-facing. Residues 75–95 (ISSLITFTSMVITMISSSWTL) form a helical membrane-spanning segment. Residues 96 to 111 (PSTHIIEHFHISHEVS) are Extracellular-facing. The helical transmembrane segment at 112-132 (TLGITLYVFGLGIGPLFLSPL) threads the bilayer. Over 133-141 (SELYGRRIT) the chain is Cytoplasmic. A helical transmembrane segment spans residues 142 to 162 (FLYALTLSIIWQCLTIWSKTI). The Extracellular segment spans residues 163-170 (TGVMFGRF). A helical membrane pass occupies residues 171 to 191 (LSGFFGSAFLSVAGGAIADIF). The Cytoplasmic segment spans residues 192-200 (DKDQIGIPM). Residues 201-221 (AIYTTSAFLGPSLGPIIGGAL) traverse the membrane as a helical segment. Topologically, residues 222–227 (YHQSYK) are extracellular. Residues 228-248 (WTFITLLITSGCCLVMIIFTI) traverse the membrane as a helical segment. The Cytoplasmic segment spans residues 249-307 (PETYKPMLLIRKAKRLRKEKNDQRYYAVLEVTREQTSLLSAIFLSTKRPFGLLLRDRMM). The helical transmembrane segment at 308 to 328 (GVLCFYTGLELAIIYLYFVAF) threads the bilayer. Residues 329–342 (PYVFKKLYNFGPME) lie on the Extracellular side of the membrane. A helical membrane pass occupies residues 343–363 (IACSYIGIMVGMILSAPTCLL). Residues 364 to 386 (FQKTFEWRVKRNNGVKTPEMRFE) lie on the Cytoplasmic side of the membrane. The chain crosses the membrane as a helical span at residues 387-407 (PLFYGAFLTPVGLFIFAFTCY). The Extracellular portion of the chain corresponds to 408–412 (KHVHW). Residues 413 to 433 (IAPIIGSAIFGSGVYFVFTGV) traverse the membrane as a helical segment. Residues 434–447 (FAYTVDAYRRYAAS) are Cytoplasmic-facing. The helical transmembrane segment at 448 to 468 (GMACNTFVRCIMAGVFPLFGL) threads the bilayer. The Extracellular segment spans residues 469-477 (QMYKSMGVN). Residues 478–498 (WAGFLLAMVTVAMIPVPFLFT) form a helical membrane-spanning segment. Topologically, residues 499 to 514 (KYGARLRAKSPYAWDD) are cytoplasmic.

It belongs to the major facilitator superfamily. CAR1 family.

Its subcellular location is the membrane. Probable drug/proton antiporter. This Saccharomyces cerevisiae (strain ATCC 204508 / S288c) (Baker's yeast) protein is Probable drug/proton antiporter YHK8 (YHK8).